A 154-amino-acid chain; its full sequence is Myoglobin (154 aa).

Residues 2–148 (GLSDGEWQLV…FRNDMAAKYK (147 aa)) form the Globin domain. A Phosphoserine modification is found at serine 4. Histidine 65 serves as a coordination point for nitrite. Histidine 65 contacts O2. Residue threonine 68 is modified to Phosphothreonine. Residue histidine 94 participates in heme b binding.

Belongs to the globin family. As to quaternary structure, monomeric.

The protein resides in the cytoplasm. It is found in the sarcoplasm. It carries out the reaction Fe(III)-heme b-[protein] + nitric oxide + H2O = Fe(II)-heme b-[protein] + nitrite + 2 H(+). The enzyme catalyses H2O2 + AH2 = A + 2 H2O. Its function is as follows. Monomeric heme protein which primary function is to store oxygen and facilitate its diffusion within muscle tissues. Reversibly binds oxygen through a pentacoordinated heme iron and enables its timely and efficient release as needed during periods of heightened demand. Depending on the oxidative conditions of tissues and cells, and in addition to its ability to bind oxygen, it also has a nitrite reductase activity whereby it regulates the production of bioactive nitric oxide. Under stress conditions, like hypoxia and anoxia, it also protects cells against reactive oxygen species thanks to its pseudoperoxidase activity. In Macaca fascicularis (Crab-eating macaque), this protein is Myoglobin (MB).